The primary structure comprises 559 residues: Beta-glucuronidase (559 aa).

An N-terminal signal peptide occupies residues methionine 1–alanine 19. Asparagine 53, asparagine 91, asparagine 99, and asparagine 143 each carry an N-linked (GlcNAc...) asparagine glycan. Catalysis depends on glutamate 194, which acts as the Proton donor. Asparagine 203, asparagine 222, and asparagine 280 each carry an N-linked (GlcNAc...) asparagine glycan. Glutamate 312 functions as the Nucleophile in the catalytic mechanism. 5 N-linked (GlcNAc...) asparagine glycosylation sites follow: asparagine 427, asparagine 440, asparagine 465, asparagine 491, and asparagine 520.

It belongs to the glycosyl hydrolase 79 family.

It is found in the secreted. The catalysed reaction is a beta-D-glucuronoside + H2O = D-glucuronate + an alcohol. Functionally, beta-glucuronidase that hydrolyzes beta-glucuronosyl and 4-O-methyl-beta-glucuronosyl residues of arabinogalactan-protein. Hydrolyzed heparan sulfate only very weakly. Has no activity on xylan from birchwood. Able to catalyze the transglycosylation of glucuronic acid (GlcA) residues from p-nitrophenyl-beta-glucuronic acid (PNP beta-GlcA) to various monosaccharide acceptors such as glucose, galactose and xylose. The protein is Beta-glucuronidase of Neurospora crassa (strain ATCC 24698 / 74-OR23-1A / CBS 708.71 / DSM 1257 / FGSC 987).